Reading from the N-terminus, the 201-residue chain is Small ribosomal subunit protein uS5 (201 aa).

The segment at 1–27 (MAGPQRRGSGAGGGERRDRKGRDGGAA) is disordered. The span at 14-23 (GERRDRKGRD) shows a compositional bias: basic and acidic residues. Residues 34–97 (YVERVVAINR…EEAKKHFFKV (64 aa)) form the S5 DRBM domain.

Belongs to the universal ribosomal protein uS5 family. Part of the 30S ribosomal subunit. Contacts proteins S4 and S8.

Functionally, with S4 and S12 plays an important role in translational accuracy. Its function is as follows. Located at the back of the 30S subunit body where it stabilizes the conformation of the head with respect to the body. This chain is Small ribosomal subunit protein uS5, found in Streptomyces avermitilis (strain ATCC 31267 / DSM 46492 / JCM 5070 / NBRC 14893 / NCIMB 12804 / NRRL 8165 / MA-4680).